The sequence spans 125 residues: MSNKVTVERAERKDGRLWLYADNVPVPLVHVTPKRHMLVDSDALAFVYILETDDRFLYVIIPKQWWPELKAAFAEGEPIWLESEGMALELEQFGEELAYLLENIRDNANYGETFEQAVQEVFFAE.

The protein belongs to the UPF0738 family.

This Geobacillus thermodenitrificans (strain NG80-2) protein is UPF0738 protein GTNG_0708.